The following is a 433-amino-acid chain: uncharacterized protein (433 aa).

The Radical SAM core domain occupies 104–349; that stretch reads ERGRNIIQVR…ELEYKKKGIE (246 aa). [4Fe-4S] cluster is bound by residues Cys-118, Cys-122, and Cys-125. Residues 171 to 172 and 236 to 238 each bind S-adenosyl-L-methionine; these read GE and MLS. The region spanning 370 to 433 is the TRAM domain; the sequence is PFKVGEVTKV…KDNIIVAELV (64 aa).

This sequence belongs to the radical SAM superfamily. [4Fe-4S] cluster serves as cofactor.

This is an uncharacterized protein from Methanocaldococcus jannaschii (strain ATCC 43067 / DSM 2661 / JAL-1 / JCM 10045 / NBRC 100440) (Methanococcus jannaschii).